The chain runs to 403 residues: Acetylornithine aminotransferase (403 aa).

Pyridoxal 5'-phosphate-binding positions include glycine 107–alanine 108 and phenylalanine 140. Arginine 143 is a N(2)-acetyl-L-ornithine binding site. Aspartate 225 to glutamine 228 contacts pyridoxal 5'-phosphate. Lysine 254 carries the post-translational modification N6-(pyridoxal phosphate)lysine. Serine 282 lines the N(2)-acetyl-L-ornithine pocket. Position 283 (threonine 283) interacts with pyridoxal 5'-phosphate.

The protein belongs to the class-III pyridoxal-phosphate-dependent aminotransferase family. ArgD subfamily. In terms of assembly, homodimer. Requires pyridoxal 5'-phosphate as cofactor.

Its subcellular location is the cytoplasm. It carries out the reaction N(2)-acetyl-L-ornithine + 2-oxoglutarate = N-acetyl-L-glutamate 5-semialdehyde + L-glutamate. Its pathway is amino-acid biosynthesis; L-arginine biosynthesis; N(2)-acetyl-L-ornithine from L-glutamate: step 4/4. This Vibrio cholerae serotype O1 (strain ATCC 39315 / El Tor Inaba N16961) protein is Acetylornithine aminotransferase.